The primary structure comprises 177 residues: Translation initiation factor IF-3 (177 aa).

This sequence belongs to the IF-3 family. Monomer.

It localises to the cytoplasm. Functionally, IF-3 binds to the 30S ribosomal subunit and shifts the equilibrium between 70S ribosomes and their 50S and 30S subunits in favor of the free subunits, thus enhancing the availability of 30S subunits on which protein synthesis initiation begins. This is Translation initiation factor IF-3 from Nitratiruptor sp. (strain SB155-2).